The primary structure comprises 428 residues: MAQAVVPAMQCQVGAVRARPAAAAAAAGGRVWGVRRTGRGTSGFRVMAVSTETTGVVTRMEQLLNMDTTPFTDKIIAEYIWVGGTGIDLRSKSRTISKPVEDPSELPKWNYDGSSTGQAPGEDSEVILYPQAIFKDPFRGGNNILVMCDTYTPAGEPIPTNKRNRAAQVFSDPKVVSQVPWFGIEQEYTLLQRDVNWPLGWPVGGYPGPQGPYYCAVGSDKSFGRDISDAHYKACLYAGINISGTNGEVMPGQWEYQVGPSVGIEAGDHIWISRYILERITEQAGVVLTLDPKPIQGDWNGAGCHTNYSTKSMREDGGFEVIKKAILNLSLRHDLHISAYGEGNERRLTGLHETASIDNFSWGVANRGCSIRVGRDTEAKGKGYLEDRRPASNMDPYVVTALLAETTILWEPTLEAEVLAAKKLALKV.

The N-terminal 48 residues, 1–48 (MAQAVVPAMQCQVGAVRARPAAAAAAAGGRVWGVRRTGRGTSGFRVMA), are a transit peptide targeting the chloroplast. Positions 75-155 (IIAEYIWVGG…VMCDTYTPAG (81 aa)) constitute a GS beta-grasp domain. Residues 95 to 120 (TISKPVEDPSELPKWNYDGSSTGQAP) form a disordered region. Residues 159-428 (PTNKRNRAAQ…LAAKKLALKV (270 aa)) enclose the GS catalytic domain.

The protein belongs to the glutamine synthetase family. As to quaternary structure, homooctamer.

It is found in the plastid. The protein resides in the chloroplast. It catalyses the reaction L-glutamate + NH4(+) + ATP = L-glutamine + ADP + phosphate + H(+). Its function is as follows. Light-modulated chloroplastic glutamine synthetase, encoded by a nuclear gene and expressed primarily in leaves, and which is responsible for the reassimilation of the ammonia generated by photorespiration. In Oryza sativa subsp. japonica (Rice), this protein is Glutamine synthetase, chloroplastic.